Consider the following 86-residue polypeptide: Putative membrane protein insertion efficiency factor (86 aa).

Belongs to the UPF0161 family.

It localises to the cell inner membrane. Functionally, could be involved in insertion of integral membrane proteins into the membrane. This chain is Putative membrane protein insertion efficiency factor, found in Oleidesulfovibrio alaskensis (strain ATCC BAA-1058 / DSM 17464 / G20) (Desulfovibrio alaskensis).